The primary structure comprises 898 residues: Serine/threonine-protein kinase TAO3 (898 aa).

One can recognise a Protein kinase domain in the interval 24–277; the sequence is FIGLHEIGHG…SAELLRHDFV (254 aa). Residues 30-38 and Lys-53 each bind ATP; that span reads IGHGSFGAV. Asp-147 serves as the catalytic Proton acceptor. Disordered stretches follow at residues 316–362 and 405–425; these read TRNG…SQSS and DEAG…VQSQ. Position 324 is a phosphoserine; by ATM (Ser-324). A phosphoserine mark is found at Ser-331, Ser-343, Ser-346, and Ser-349. The span at 334–351 shows a compositional bias: polar residues; it reads GTSLNREMDSLGSNHSIP. A compositionally biased stretch (low complexity) spans 352–362; that stretch reads SMSVSTGSQSS. Phosphothreonine is present on Thr-357. Position 359 is a phosphoserine (Ser-359). Basic and acidic residues predominate over residues 405–416; that stretch reads DEAGHGDPRPEP. A Phosphoserine modification is found at Ser-442. Coiled-coil stretches lie at residues 452 to 502, 548 to 649, and 754 to 879; these read EQEN…THAN, FLES…HAML, and LKTL…DMES. The interval 565–596 is disordered; the sequence is EEMNEDHSTPKKEKQERISKHKENLQHTQAEE. Lys-830 carries the N6-acetyllysine modification.

Belongs to the protein kinase superfamily. STE Ser/Thr protein kinase family. STE20 subfamily. As to quaternary structure, self-associates. Interacts with ERN1 and TRAF2. Interaction with TRAF2 is facilitated under ER stress conditions, such as treatment with tunicamycin, and may promote TRAF2 phosphorylation. Interacts (via N-terminus) with STK25; the interaction promotes STK25 abundance at the level of protein expression and/or stability. In terms of processing, autophosphorylated. Phosphorylation at Ser-324 by ATM following DNA damage is required for activation of the p38/MAPK14 stress-activated MAPK cascade. Phosphorylated at Ser-324 and on Tyr residues during T cell activation. Phosphorylated by LRRK2.

It localises to the cytoplasm. The protein localises to the cell membrane. Its subcellular location is the membrane raft. It is found in the lipid droplet. It carries out the reaction L-seryl-[protein] + ATP = O-phospho-L-seryl-[protein] + ADP + H(+). The enzyme catalyses L-threonyl-[protein] + ATP = O-phospho-L-threonyl-[protein] + ADP + H(+). Serine/threonine-protein kinase that acts as a regulator of the p38/MAPK14 stress-activated MAPK cascade and of the MAPK8/JNK cascade. In response to DNA damage, involved in the G2/M transition DNA damage checkpoint by activating the p38/MAPK14 stress-activated MAPK cascade, probably by mediating phosphorylation of upstream MAP2K3 and MAP2K6 kinases. Inhibits basal activity of the MAPK8/JNK cascade and diminishes its activation in response to epidermal growth factor (EGF). Positively regulates canonical T cell receptor (TCR) signaling by preventing early PTPN6/SHP1-mediated inactivation of LCK, ensuring sustained TCR signaling that is required for optimal activation and differentiation of T cells. Phosphorylates PTPN6/SHP1 on 'Thr-394', leading to its polyubiquitination and subsequent proteasomal degradation. Required for cell surface expression of metalloprotease ADAM10 on type 1 transitional B cells which is necessary for their NOTCH-mediated development into marginal zone B cells. Also required for the NOTCH-mediated terminal differentiation of splenic conventional type 2 dendritic cells. Positively regulates osteoblast differentiation by acting as an upstream activator of the JNK pathway. Promotes JNK signaling in hepatocytes and positively regulates hepatocyte lipid storage by inhibiting beta-oxidation and triacylglycerol secretion while enhancing lipid synthesis. Restricts age-associated inflammation by negatively regulating differentiation of macrophages and their production of pro-inflammatory cytokines. Plays a role in negatively regulating the abundance of regulatory T cells in white adipose tissue. In Pongo abelii (Sumatran orangutan), this protein is Serine/threonine-protein kinase TAO3 (TAOK3).